Reading from the N-terminus, the 122-residue chain is Large ribosomal subunit protein uL14 (122 aa).

Belongs to the universal ribosomal protein uL14 family. In terms of assembly, part of the 50S ribosomal subunit. Forms a cluster with proteins L3 and L19. In the 70S ribosome, L14 and L19 interact and together make contacts with the 16S rRNA in bridges B5 and B8.

Binds to 23S rRNA. Forms part of two intersubunit bridges in the 70S ribosome. The polypeptide is Large ribosomal subunit protein uL14 (Trichormus variabilis (strain ATCC 29413 / PCC 7937) (Anabaena variabilis)).